A 603-amino-acid chain; its full sequence is Elongation factor 4 (603 aa).

Positions 2–184 (NHIRNFSIIA…AVVARMPPPR (183 aa)) constitute a tr-type G domain. GTP is bound by residues 14–19 (DHGKST) and 131–134 (NKMD).

The protein belongs to the TRAFAC class translation factor GTPase superfamily. Classic translation factor GTPase family. LepA subfamily.

Its subcellular location is the cell inner membrane. It carries out the reaction GTP + H2O = GDP + phosphate + H(+). Its function is as follows. Required for accurate and efficient protein synthesis under certain stress conditions. May act as a fidelity factor of the translation reaction, by catalyzing a one-codon backward translocation of tRNAs on improperly translocated ribosomes. Back-translocation proceeds from a post-translocation (POST) complex to a pre-translocation (PRE) complex, thus giving elongation factor G a second chance to translocate the tRNAs correctly. Binds to ribosomes in a GTP-dependent manner. This chain is Elongation factor 4, found in Albidiferax ferrireducens (strain ATCC BAA-621 / DSM 15236 / T118) (Rhodoferax ferrireducens).